The primary structure comprises 46 residues: uncharacterized protein (46 aa).

This is an uncharacterized protein from Dictyostelium discoideum (Social amoeba).